Here is a 401-residue protein sequence, read N- to C-terminus: Glucose-6-phosphate isomerase (401 aa).

Residue Glu-261 is the Proton donor of the active site. Active-site residues include His-282 and Lys-392.

Belongs to the GPI family. In terms of assembly, homodimer.

The protein localises to the cytoplasm. The catalysed reaction is alpha-D-glucose 6-phosphate = beta-D-fructose 6-phosphate. Its pathway is carbohydrate biosynthesis; gluconeogenesis. It participates in carbohydrate degradation; glycolysis; D-glyceraldehyde 3-phosphate and glycerone phosphate from D-glucose: step 2/4. Its activity is regulated as follows. Competively inhibited by 6-phosphogluconate and erythrose 4-phosphate. Catalyzes the isomerization of glucose-6-P to fructose-6-P. The chain is Glucose-6-phosphate isomerase from Methanocaldococcus jannaschii (strain ATCC 43067 / DSM 2661 / JAL-1 / JCM 10045 / NBRC 100440) (Methanococcus jannaschii).